Here is a 219-residue protein sequence, read N- to C-terminus: Inner membrane protein YghB (219 aa).

At 1 to 17 (MAVIQDIIAALWQHDFA) the chain is on the cytoplasmic side. A helical transmembrane segment spans residues 18 to 38 (ALANPHVVSVVYFVMFATLFL). Topologically, residues 39–67 (ENGLLPASFLPGDSLLLLAGALIAQDVMH) are periplasmic. The helical transmembrane segment at 68 to 88 (FLPTIGILTAAASLGCWLSYI) threads the bilayer. Residues 89–160 (QGRWLGNTRT…RRFQFFNWLS (72 aa)) lie on the Cytoplasmic side of the membrane. A helical membrane pass occupies residues 161 to 181 (GLLWVTVVTSFGYALSMIPFV). Over 182-191 (KRHEDQVMTF) the chain is Periplasmic. A helical membrane pass occupies residues 192–212 (LMILPVALLVAGLLGTLVVVI). Topologically, residues 213–219 (KKKYCNA) are cytoplasmic.

It belongs to the DedA family.

It localises to the cell inner membrane. This is Inner membrane protein YghB (yghB) from Salmonella typhimurium (strain LT2 / SGSC1412 / ATCC 700720).